Here is a 789-residue protein sequence, read N- to C-terminus: GDH/6PGL endoplasmic bifunctional protein (789 aa).

The signal sequence occupies residues 1-16 (MLLAAMCLALLGCLQA). Glutamine 17 bears the Pyrrolidone carboxylic acid mark. Positions 17 to 524 (QELKGHVSII…GGQLTFSQQQ (508 aa)) are hexose-6-phosphate dehydrogenase. Residues 29–36 (GATGDLAK) and tyrosine 146 each bind NADP(+). N-linked (GlcNAc...) asparagine glycosylation occurs at asparagine 154. Lysine 171 is an NADP(+) binding site. D-glucose 6-phosphate contacts are provided by residues lysine 171, 201 to 205 (HYLGK), glutamate 240, and aspartate 259. Lysine 205 bears the N6-succinyllysine mark. Residue histidine 264 is the Proton acceptor of the active site. The N-linked (GlcNAc...) asparagine glycan is linked to asparagine 279. D-glucose 6-phosphate-binding residues include lysine 357 and arginine 362. NADP(+) is bound at residue arginine 367. Lysine 424 bears the N6-succinyllysine mark. The tract at residues 525-538 (LEVLIPDLGSVPKP) is linker. A 6-phosphogluconolactonase region spans residues 539-789 (SDFQVLGARY…WYMDYEAFLG (251 aa)). Position 615 (tryptophan 615) interacts with NADP(+). Asparagine 681 carries N-linked (GlcNAc...) asparagine glycosylation.

This sequence in the N-terminal section; belongs to the glucose-6-phosphate dehydrogenase family. The protein in the C-terminal section; belongs to the glucosamine/galactosamine-6-phosphate isomerase family. 6-phosphogluconolactonase subfamily. Homodimer. In terms of tissue distribution, expressed in liver (at protein level). Expressed in muscles. Expressed in adipose tissues.

The protein localises to the endoplasmic reticulum lumen. It catalyses the reaction D-glucose 6-phosphate + NAD(+) = 6-phospho-D-glucono-1,5-lactone + NADH + H(+). The enzyme catalyses D-glucose 6-phosphate + NADP(+) = 6-phospho-D-glucono-1,5-lactone + NADPH + H(+). The catalysed reaction is 6-phospho-D-glucono-1,5-lactone + H2O = 6-phospho-D-gluconate + H(+). It carries out the reaction 2-deoxy-D-glucose 6-phosphate + NAD(+) = 2-deoxy-6-phospho-D-glucono-1,5-lactone + NADH + H(+). It catalyses the reaction 2-deoxy-D-glucose 6-phosphate + NADP(+) = 2-deoxy-6-phospho-D-glucono-1,5-lactone + NADPH + H(+). The enzyme catalyses D-galactose 6-phosphate + NADP(+) = 6-phospho-D-galactono-1,5-lactone + NADPH + H(+). The catalysed reaction is D-galactose 6-phosphate + NAD(+) = 6-phospho-D-galactono-1,5-lactone + NADH + H(+). It carries out the reaction D-glucosamine 6-phosphate + NADP(+) = 2-amino-2-deoxy-6-phospho-D-glucono-1,5-lactone + NADPH + 2 H(+). It catalyses the reaction D-glucose + NAD(+) = D-glucono-1,5-lactone + NADH + H(+). The enzyme catalyses D-glucose + NADP(+) = D-glucono-1,5-lactone + NADPH + H(+). The catalysed reaction is D-glucose 6-sulfate + NADP(+) = 6-sulfo-D-glucono-1,5-lactone + NADPH + H(+). It functions in the pathway carbohydrate degradation; pentose phosphate pathway; D-ribulose 5-phosphate from D-glucose 6-phosphate (oxidative stage). Its pathway is carbohydrate degradation; pentose phosphate pathway; D-ribulose 5-phosphate from D-glucose 6-phosphate (oxidative stage): step 2/3. Bifunctional enzyme localized in the lumen of the endoplasmic reticulum that catalyzes the first two steps of the oxidative branch of the pentose phosphate pathway/shunt, an alternative to glycolysis and a major source of reducing power and metabolic intermediates for biosynthetic processes. Has a hexose-6-phosphate dehydrogenase activity, with broad substrate specificity compared to glucose-6-phosphate 1-dehydrogenase/G6PD, and catalyzes the first step of the pentose phosphate pathway. In addition, acts as a 6-phosphogluconolactonase and catalyzes the second step of the pentose phosphate pathway. May have a dehydrogenase activity for alternative substrates including glucosamine 6-phosphate and glucose 6-sulfate. The main function of this enzyme is to provide reducing equivalents such as NADPH to maintain the adequate levels of reductive cofactors in the oxidizing environment of the endoplasmic reticulum. By producing NADPH that is needed by reductases of the lumen of the endoplasmic reticulum like corticosteroid 11-beta-dehydrogenase isozyme 1/HSD11B1, indirectly regulates their activity. This is GDH/6PGL endoplasmic bifunctional protein from Mus musculus (Mouse).